Reading from the N-terminus, the 1849-residue chain is Brefeldin A-inhibited guanine nucleotide-exchange protein 1 (1849 aa).

A DCB; DCB:DCB domain and DCB:HUS domain interaction region spans residues 2-224 (YEGKKTKNMF…QEAKQMEKER (223 aa)). A compositionally biased stretch (basic and acidic residues) spans 46–58 (AETEKQSPPHGEA). 4 disordered regions span residues 46-65 (AETEKQSPPHGEAKAGSSTL), 216-248 (EAKQMEKERHRQHHHLLQSPVSHHEPESPQLRY), 267-302 (LHTNDVDKSLQDDTEPENGSDISSAENEQTEADQAT), and 378-413 (TPISVAYTPSLPDDRLSVSSNDTQESGNSSGPSPGA). Residue Ser-52 is modified to Phosphoserine. Residues 267–277 (LHTNDVDKSLQ) are compositionally biased toward basic and acidic residues. Residues Ser-286, Ser-289, Ser-290, Ser-397, and Ser-410 each carry the phosphoserine modification. Polar residues predominate over residues 394-409 (SVSSNDTQESGNSSGP). An HUS; DCB:HUS domain interaction region spans residues 557–577 (ADAQSVVDIYVNYDCDLNAAN). One can recognise an SEC7 domain in the interval 709–840 (FNKKPKRGIQ…IIMLTTDLHS (132 aa)). The short motif at 711 to 715 (KKPKR) is the Nuclear localization signal (NLS) element. Residue Ser-1079 is modified to Phosphoserine. The interval 1543 to 1562 (RPNSGETAPPPPSPVSEKPL) is disordered. Phosphoserine is present on residues Ser-1566 and Ser-1569.

In terms of assembly, homodimer. Interacts with ARFGEF2/BIG2; both proteins are probably part of the same or very similar macromolecular complexes. Interacts with FKBP2. Interacts with MYO9B. Interacts with PRKAR1A and PRKAR2A. Interacts with PPP1CC. Interacts with NCL, FBL, NUP62 and U3 small nucleolar RNA. Interacts with DPY30. Interacts with PDE3A. Interacts with KANK1. Interacts with TBC1D22A and TBC1D22B. Interacts (via N-terminus) with ARL1. Post-translationally, phosphorylated. In vitro phosphorylated by PKA reducing its GEF activity and dephosphorylated by phosphatase PP1. In terms of tissue distribution, expressed in placenta, lung, heart, brain, kidney and pancreas.

The protein localises to the cytoplasm. It localises to the perinuclear region. It is found in the golgi apparatus. The protein resides in the trans-Golgi network membrane. Its subcellular location is the nucleus. The protein localises to the nucleolus. It localises to the nucleus matrix. Its activity is regulated as follows. Inhibited by brefeldin A. Promotes guanine-nucleotide exchange on ARF1 and ARF3. Promotes the activation of ARF1/ARF3 through replacement of GDP with GTP. Involved in vesicular trafficking. Required for the maintenance of Golgi structure; the function may be independent of its GEF activity. Required for the maturation of integrin beta-1 in the Golgi. Involved in the establishment and persistence of cell polarity during directed cell movement in wound healing. Proposed to act as A kinase-anchoring protein (AKAP) and may mediate crosstalk between Arf and PKA pathways. Inhibits GAP activity of MYO9B probably through competitive RhoA binding. The function in the nucleus remains to be determined. The sequence is that of Brefeldin A-inhibited guanine nucleotide-exchange protein 1 (ARFGEF1) from Homo sapiens (Human).